The following is a 535-amino-acid chain: Dual specificity calcium/calmodulin-dependent 3',5'-cyclic nucleotide phosphodiesterase 1B (535 aa).

A disordered region spans residues 1 to 21 (MELSPRSPPEMLESDCPSPLE). 2 positions are modified to phosphoserine: Ser7 and Ser14. Calmodulin-binding stretches follow at residues 27-47 (SKKMWIKLRSLLRYMVKQLEN) and 117-140 (EKPKFRSIVHAVQAGIFVERMFRR). Residues 145–502 (VGPTYSTAVH…QKWKERAASG (358 aa)) form the PDEase domain. His222 (proton donor) is an active-site residue. Zn(2+)-binding residues include His226, His262, Asp263, and Asp369. Asp263 contacts Mg(2+). Disordered stretches follow at residues 445–474 (PLTDDDSKSKSQPSFQWRQPSLDVDVGDPN) and 495–535 (WKER…GNLD). Over residues 454-463 (KSQPSFQWRQ) the composition is skewed to polar residues. Phosphoserine occurs at positions 465 and 513.

The protein belongs to the cyclic nucleotide phosphodiesterase family. PDE1 subfamily. Homodimer. Zn(2+) serves as cofactor. It depends on Mg(2+) as a cofactor. As to expression, expressed in brain.

Its subcellular location is the cytoplasm. The protein resides in the cytosol. It carries out the reaction a nucleoside 3',5'-cyclic phosphate + H2O = a nucleoside 5'-phosphate + H(+). The catalysed reaction is 3',5'-cyclic GMP + H2O = GMP + H(+). It catalyses the reaction 3',5'-cyclic AMP + H2O = AMP + H(+). With respect to regulation, type I PDE are activated by the binding of calmodulin in the presence of Ca(2+). Functionally, cyclic nucleotide phosphodiesterase with a dual specificity for the second messengers cAMP and cGMP, which are key regulators of many important physiological processes. Has a preference for cGMP as a substrate. The sequence is that of Dual specificity calcium/calmodulin-dependent 3',5'-cyclic nucleotide phosphodiesterase 1B from Rattus norvegicus (Rat).